A 431-amino-acid chain; its full sequence is UDP-N-acetylglucosamine 1-carboxyvinyltransferase (431 aa).

Position 22–23 (22–23) interacts with phosphoenolpyruvate; the sequence is KN. Arg-92 contributes to the UDP-N-acetyl-alpha-D-glucosamine binding site. The active-site Proton donor is the Asp-116. UDP-N-acetyl-alpha-D-glucosamine is bound by residues 121-125, Asp-307, and Ile-330; that span reads RPIDQ.

The protein belongs to the EPSP synthase family. MurA subfamily.

The protein resides in the cytoplasm. It catalyses the reaction phosphoenolpyruvate + UDP-N-acetyl-alpha-D-glucosamine = UDP-N-acetyl-3-O-(1-carboxyvinyl)-alpha-D-glucosamine + phosphate. It participates in cell wall biogenesis; peptidoglycan biosynthesis. Cell wall formation. Adds enolpyruvyl to UDP-N-acetylglucosamine. This Lactobacillus acidophilus (strain ATCC 700396 / NCK56 / N2 / NCFM) protein is UDP-N-acetylglucosamine 1-carboxyvinyltransferase.